The primary structure comprises 185 residues: Elongation factor P (185 aa).

This sequence belongs to the elongation factor P family.

It is found in the cytoplasm. Its pathway is protein biosynthesis; polypeptide chain elongation. Its function is as follows. Involved in peptide bond synthesis. Stimulates efficient translation and peptide-bond synthesis on native or reconstituted 70S ribosomes in vitro. Probably functions indirectly by altering the affinity of the ribosome for aminoacyl-tRNA, thus increasing their reactivity as acceptors for peptidyl transferase. The chain is Elongation factor P from Carboxydothermus hydrogenoformans (strain ATCC BAA-161 / DSM 6008 / Z-2901).